We begin with the raw amino-acid sequence, 389 residues long: Phospho-N-acetylmuramoyl-pentapeptide-transferase (389 aa).

A run of 10 helical transmembrane segments spans residues 25–45, 73–93, 97–117, 135–155, 189–209, 222–242, 259–279, 286–306, 311–331, and 366–386; these read RAVA…PWVI, TMGG…WADL, FIWI…VDDY, FWQS…VSEA, SMTY…VIVG, GLVI…AYVM, AGEM…FLWF, VFMG…IAVI, IVLF…MLQV, and QVVV…LSTL.

This sequence belongs to the glycosyltransferase 4 family. MraY subfamily. It depends on Mg(2+) as a cofactor.

It localises to the cell inner membrane. The enzyme catalyses UDP-N-acetyl-alpha-D-muramoyl-L-alanyl-gamma-D-glutamyl-meso-2,6-diaminopimeloyl-D-alanyl-D-alanine + di-trans,octa-cis-undecaprenyl phosphate = di-trans,octa-cis-undecaprenyl diphospho-N-acetyl-alpha-D-muramoyl-L-alanyl-D-glutamyl-meso-2,6-diaminopimeloyl-D-alanyl-D-alanine + UMP. It participates in cell wall biogenesis; peptidoglycan biosynthesis. Functionally, catalyzes the initial step of the lipid cycle reactions in the biosynthesis of the cell wall peptidoglycan: transfers peptidoglycan precursor phospho-MurNAc-pentapeptide from UDP-MurNAc-pentapeptide onto the lipid carrier undecaprenyl phosphate, yielding undecaprenyl-pyrophosphoryl-MurNAc-pentapeptide, known as lipid I. The sequence is that of Phospho-N-acetylmuramoyl-pentapeptide-transferase from Paraburkholderia phymatum (strain DSM 17167 / CIP 108236 / LMG 21445 / STM815) (Burkholderia phymatum).